A 109-amino-acid polypeptide reads, in one-letter code: Nucleoid-associated protein VV2410 (109 aa).

The interval 1-22 is disordered; that stretch reads MFGKGGMGNLMKQAQQMQERMQ.

The protein belongs to the YbaB/EbfC family. Homodimer.

Its subcellular location is the cytoplasm. The protein resides in the nucleoid. Functionally, binds to DNA and alters its conformation. May be involved in regulation of gene expression, nucleoid organization and DNA protection. This is Nucleoid-associated protein VV2410 from Vibrio vulnificus (strain YJ016).